The following is a 674-amino-acid chain: 1,4-alpha-glucan branching enzyme GlgB 1 (674 aa).

Catalysis depends on Asp-336, which acts as the Nucleophile. The active-site Proton donor is the Glu-389.

The protein belongs to the glycosyl hydrolase 13 family. GlgB subfamily. In terms of assembly, monomer.

The catalysed reaction is Transfers a segment of a (1-&gt;4)-alpha-D-glucan chain to a primary hydroxy group in a similar glucan chain.. It participates in glycan biosynthesis; glycogen biosynthesis. In terms of biological role, catalyzes the formation of the alpha-1,6-glucosidic linkages in glycogen by scission of a 1,4-alpha-linked oligosaccharide from growing alpha-1,4-glucan chains and the subsequent attachment of the oligosaccharide to the alpha-1,6 position. This chain is 1,4-alpha-glucan branching enzyme GlgB 1, found in Clostridium perfringens (strain SM101 / Type A).